The sequence spans 395 residues: THAP domain-containing protein 5 (395 aa).

Residues 1-84 (MPRYCAAICC…LKQTAVPTIF (84 aa)) form a THAP-type zinc finger. Residues 85–112 (SLPEDNQGKDPSKKKSQKKNLEDEKEVC) are disordered. The span at 90 to 112 (NQGKDPSKKKSQKKNLEDEKEVC) shows a compositional bias: basic and acidic residues. Residues 321–324 (EHSY) carry the HCFC1-binding motif (HBM) motif. Residues 348 to 382 (LELKEQQTLGRLKSLEALIRQLKQENWLSEENVKI) are a coiled coil.

As to quaternary structure, interacts with HTRA2; under apoptotic conditions. Interacts with ABRAXAS2. Post-translationally, cleaved by HTRA2 during apoptosis. Detected in heart. Detected in brain and muscle (at protein level). Highly expressed in the heart. Also found in brain and skeletal muscle.

Its subcellular location is the nucleus. Its function is as follows. Has sequence-specific DNA-binding activity and can function as transcriptional repressor (in vitro). May be a regulator of cell cycle: THAP5 overexpression in human cell lines causes cell cycle arrest at G2/M phase. The sequence is that of THAP domain-containing protein 5 (THAP5) from Homo sapiens (Human).